The primary structure comprises 340 residues: Glycerol-3-phosphate dehydrogenase [NAD(P)+] (340 aa).

Positions 13, 14, and 108 each coordinate NADPH. Sn-glycerol 3-phosphate contacts are provided by Lys108, Gly139, and Ser141. NADPH is bound at residue Ala143. Positions 194, 247, 257, 258, and 259 each coordinate sn-glycerol 3-phosphate. Residue Lys194 is the Proton acceptor of the active site. Residue Arg258 participates in NADPH binding. NADPH contacts are provided by Val282 and Glu284.

Belongs to the NAD-dependent glycerol-3-phosphate dehydrogenase family.

The protein localises to the cytoplasm. The catalysed reaction is sn-glycerol 3-phosphate + NAD(+) = dihydroxyacetone phosphate + NADH + H(+). It carries out the reaction sn-glycerol 3-phosphate + NADP(+) = dihydroxyacetone phosphate + NADPH + H(+). Its pathway is membrane lipid metabolism; glycerophospholipid metabolism. In terms of biological role, catalyzes the reduction of the glycolytic intermediate dihydroxyacetone phosphate (DHAP) to sn-glycerol 3-phosphate (G3P), the key precursor for phospholipid synthesis. This Streptococcus thermophilus (strain ATCC BAA-491 / LMD-9) protein is Glycerol-3-phosphate dehydrogenase [NAD(P)+].